We begin with the raw amino-acid sequence, 518 residues long: Glutamate--cysteine ligase (518 aa).

It belongs to the glutamate--cysteine ligase type 1 family. Type 1 subfamily.

It carries out the reaction L-cysteine + L-glutamate + ATP = gamma-L-glutamyl-L-cysteine + ADP + phosphate + H(+). It functions in the pathway sulfur metabolism; glutathione biosynthesis; glutathione from L-cysteine and L-glutamate: step 1/2. The protein is Glutamate--cysteine ligase of Shigella dysenteriae serotype 1 (strain Sd197).